A 72-amino-acid chain; its full sequence is Cytochrome c oxidase subunit 8C, mitochondrial (72 aa).

The N-terminal 29 residues, 1-29 (MSRLLLLCSSLLRHRAVLFSKPGHPGRLS), are a transit peptide targeting the mitochondrion. At 30-40 (HSESPQKKILS) the chain is on the mitochondrial matrix side. A helical membrane pass occupies residues 41–64 (PTESAVGIVVFFTTFYIPAAYVLS). Residues 65-72 (SLKYFKGE) are Mitochondrial intermembrane-facing.

Belongs to the cytochrome c oxidase VIII family. In terms of assembly, component of the cytochrome c oxidase (complex IV, CIV), a multisubunit enzyme composed of 14 subunits. The complex is composed of a catalytic core of 3 subunits MT-CO1, MT-CO2 and MT-CO3, encoded in the mitochondrial DNA, and 11 supernumerary subunits COX4I, COX5A, COX5B, COX6A, COX6B, COX6C, COX7A, COX7B, COX7C, COX8 and NDUFA4, which are encoded in the nuclear genome. The complex exists as a monomer or a dimer and forms supercomplexes (SCs) in the inner mitochondrial membrane with NADH-ubiquinone oxidoreductase (complex I, CI) and ubiquinol-cytochrome c oxidoreductase (cytochrome b-c1 complex, complex III, CIII), resulting in different assemblies (supercomplex SCI(1)III(2)IV(1) and megacomplex MCI(2)III(2)IV(2)).

Its subcellular location is the mitochondrion inner membrane. It participates in energy metabolism; oxidative phosphorylation. Component of the cytochrome c oxidase, the last enzyme in the mitochondrial electron transport chain which drives oxidative phosphorylation. The respiratory chain contains 3 multisubunit complexes succinate dehydrogenase (complex II, CII), ubiquinol-cytochrome c oxidoreductase (cytochrome b-c1 complex, complex III, CIII) and cytochrome c oxidase (complex IV, CIV), that cooperate to transfer electrons derived from NADH and succinate to molecular oxygen, creating an electrochemical gradient over the inner membrane that drives transmembrane transport and the ATP synthase. Cytochrome c oxidase is the component of the respiratory chain that catalyzes the reduction of oxygen to water. Electrons originating from reduced cytochrome c in the intermembrane space (IMS) are transferred via the dinuclear copper A center (CU(A)) of subunit 2 and heme A of subunit 1 to the active site in subunit 1, a binuclear center (BNC) formed by heme A3 and copper B (CU(B)). The BNC reduces molecular oxygen to 2 water molecules using 4 electrons from cytochrome c in the IMS and 4 protons from the mitochondrial matrix. The protein is Cytochrome c oxidase subunit 8C, mitochondrial (Cox8c) of Mus musculus (Mouse).